The following is a 182-amino-acid chain: dTTP/UTP pyrophosphatase (182 aa).

Asp-64 acts as the Proton acceptor in catalysis.

The protein belongs to the Maf family. YhdE subfamily. It depends on a divalent metal cation as a cofactor.

The protein resides in the cytoplasm. It catalyses the reaction dTTP + H2O = dTMP + diphosphate + H(+). The catalysed reaction is UTP + H2O = UMP + diphosphate + H(+). Functionally, nucleoside triphosphate pyrophosphatase that hydrolyzes dTTP and UTP. May have a dual role in cell division arrest and in preventing the incorporation of modified nucleotides into cellular nucleic acids. The polypeptide is dTTP/UTP pyrophosphatase (Thermosipho melanesiensis (strain DSM 12029 / CIP 104789 / BI429)).